We begin with the raw amino-acid sequence, 457 residues long: Tubulin beta chain (457 aa).

Gln11, Glu69, Ser138, Gly142, Thr143, Gly144, Asn204, and Asn226 together coordinate GTP. Glu69 serves as a coordination point for Mg(2+). The tract at residues Glu431 to Ala457 is disordered.

The protein belongs to the tubulin family. As to quaternary structure, dimer of alpha and beta chains. A typical microtubule is a hollow water-filled tube with an outer diameter of 25 nm and an inner diameter of 15 nM. Alpha-beta heterodimers associate head-to-tail to form protofilaments running lengthwise along the microtubule wall with the beta-tubulin subunit facing the microtubule plus end conferring a structural polarity. Microtubules usually have 13 protofilaments but different protofilament numbers can be found in some organisms and specialized cells. The cofactor is Mg(2+).

It localises to the cytoplasm. The protein resides in the cytoskeleton. In terms of biological role, tubulin is the major constituent of microtubules, a cylinder consisting of laterally associated linear protofilaments composed of alpha- and beta-tubulin heterodimers. Microtubules grow by the addition of GTP-tubulin dimers to the microtubule end, where a stabilizing cap forms. Below the cap, tubulin dimers are in GDP-bound state, owing to GTPase activity of alpha-tubulin. This chain is Tubulin beta chain (TUBB1), found in Porphyra purpurea (Red seaweed).